Reading from the N-terminus, the 560-residue chain is Protein AATF (560 aa).

Alanine 2 carries the N-acetylalanine modification. A phosphoserine mark is found at serine 61 and serine 63. The segment at 76–208 is disordered; sequence TSRKAWNEDH…GDRNSEDDGV (133 aa). Over residues 94-129 the composition is skewed to acidic residues; the sequence is SDEEISDEEGSGDEDSEGLGLEEYDEDDLGAAEEQE. Phosphoserine occurs at positions 150 and 155. Residues 156 to 165 show a composition bias toward basic and acidic residues; the sequence is DFEKFTKGMD. Positions 168–195 are enriched in acidic residues; sequence GSSEEEEDEESGMEEGDDAEDSQGESEE. Serine 203, serine 273, serine 316, serine 320, and serine 321 each carry phosphoserine. Residues 273-315 are POLR2J binding; that stretch reads SALKNSHKALKALLRSLVGLQEELLFQYPDTRYLVDGTKPNAG. A disordered region spans residues 309–333; it reads GTKPNAGSEEISSEDDELVEEKKQQ. Residues 316–372 form an RB1 binding region; sequence SEEISSEDDELVEEKKQQRRRVPAKRKLEMEDYPSFMAKRFADFTVYRNRTLQKWHD. Residues 373 to 472 are RB1 and SP1 binding; sequence KTKLASGKLG…FYHQLLRELI (100 aa).

It belongs to the AATF family. In terms of assembly, part of the small subunit (SSU) processome, composed of more than 70 proteins and the RNA chaperone small nucleolar RNA (snoRNA) U3. Interacts with POLR2J, RB1/RB, RBL1/P107 and RBL2/P130. Interacts with PAWR and SP1. May also bind MAPT. In terms of processing, hyperphosphorylated during the G1/S phase transition. As to expression, ubiquitously expressed. Expressed at high levels in brain, heart, kidney, placenta and thymus.

The protein localises to the nucleus. The protein resides in the nucleolus. Functionally, part of the small subunit (SSU) processome, first precursor of the small eukaryotic ribosomal subunit. During the assembly of the SSU processome in the nucleolus, many ribosome biogenesis factors, an RNA chaperone and ribosomal proteins associate with the nascent pre-rRNA and work in concert to generate RNA folding, modifications, rearrangements and cleavage as well as targeted degradation of pre-ribosomal RNA by the RNA exosome. May function as a general inhibitor of the histone deacetylase HDAC1. Binding to the pocket region of RB1 may displace HDAC1 from RB1/E2F complexes, leading to activation of E2F target genes and cell cycle progression. Conversely, displacement of HDAC1 from SP1 bound to the CDKN1A promoter leads to increased expression of this CDK inhibitor and blocks cell cycle progression. Also antagonizes PAWR mediated induction of aberrant amyloid peptide production in Alzheimer disease (presenile and senile dementia), although the molecular basis for this phenomenon has not been described to date. The polypeptide is Protein AATF (Homo sapiens (Human)).